A 343-amino-acid polypeptide reads, in one-letter code: Protein RecA (343 aa).

An ATP-binding site is contributed by 66 to 73 (GPESSGKT).

The protein belongs to the RecA family.

The protein resides in the cytoplasm. Functionally, can catalyze the hydrolysis of ATP in the presence of single-stranded DNA, the ATP-dependent uptake of single-stranded DNA by duplex DNA, and the ATP-dependent hybridization of homologous single-stranded DNAs. It interacts with LexA causing its activation and leading to its autocatalytic cleavage. The protein is Protein RecA of Rickettsia canadensis (strain McKiel).